A 166-amino-acid polypeptide reads, in one-letter code: MLLILLSVALLAFSSAQDLDEDVSQEDVPLVISDGGDSEQFIDEERQGPPLGGQQSQPSAGDGNQNDGPQQGPPQQGGQQQQGPPPPQGKPQGPPQQGGHPPPPQGRPQGPPQQGGHPRPPRGRPQGPPQQGGHQQGPPPPPPGKPQGPPPQGGRPQGPPQGQSPQ.

The signal sequence occupies residues methionine 1–alanine 16. Residues alanine 16–glutamine 166 form a disordered region. Pyrrolidone carboxylic acid is present on glutamine 17. Positions glutamine 17 to arginine 46 are inhibits hydroxyapatite formation, binds to hydroxyapatite and calcium. Serine 24 is modified (phosphoserine; by FAM20C). Position 33 is a phosphoserine; alternate (serine 33). Serine 33 and serine 38 each carry an O-linked (GlcA) serine; alternate glycan. Serine 38 is modified (phosphoserine; by FAM20C; alternate). Composition is skewed to low complexity over residues glycine 48–glycine 61 and glycine 68–glutamine 82. Pro residues-rich tracts occupy residues glycine 83–proline 111 and glycine 137–proline 159.

Proteolytically cleaved; PRP-2, PRP-1, PIF-S and Db-S yield PRP-4, PRP-3 (protein A), PIF-F and Db-F, respectively. Post-translationally, a hexuronic acid was shown to be linked to Ser-33 in about 40% of the polypeptides. Neither the structure of the carbohydrate (whether glucuronic acid or an isomer of), nor the linkage (whether a glycoside or an ester) has been definitely established.

It is found in the secreted. In terms of biological role, PRP's act as highly potent inhibitors of crystal growth of calcium phosphates. They provide a protective and reparative environment for dental enamel which is important for the integrity of the teeth. This chain is Salivary acidic proline-rich phosphoprotein 1/2 (PRH1), found in Homo sapiens (Human).